We begin with the raw amino-acid sequence, 536 residues long: Small conductance calcium-activated potassium channel protein 1 (536 aa).

The segment at 1–90 (MSSRSHNGSV…KPPTVSHRLG (90 aa)) is disordered. The span at 65–75 (QEEEEEEEDED) shows a compositional bias: acidic residues. Residues 107 to 127 (LIFGMFGIVVMVTETELSWGV) traverse the membrane as a helical segment. The chain crosses the membrane as a helical span at residues 136–156 (FALKCLISLSTVILLGLVILY). A helical transmembrane segment spans residues 224–244 (VLLSIPMFLRLYLLARVMLLH). Residues 273–293 (LMTICPGTVLLVFSISSWIVA) form a helical membrane-spanning segment. A helical transmembrane segment spans residues 313-333 (FLGAMWLISITFLSIGYGDMV). Residues 342 to 362 (VCLLTGIMGAGCTALVVAVVA) constitute an intramembrane region (pore-forming). The interval 380-459 (DTQLTKRVKN…LADLAKAQSI (80 aa)) is calmodulin-binding. A helical transmembrane segment spans residues 487–507 (VLGASLQALPSLIAQAICPLP). A disordered region spans residues 514–536 (SHLTTAAQSPQSHWLPTTASDCG). Residues 515 to 536 (HLTTAAQSPQSHWLPTTASDCG) are compositionally biased toward polar residues.

The protein belongs to the potassium channel KCNN family. KCa2.1/KCNN1 subfamily. In terms of assembly, homodimer. Heteromultimer with KCNN2 and KCNN3. The complex is composed of 4 channel subunits each of which binds to a calmodulin subunit which regulates the channel activity through calcium-binding. Interacts with calmodulin. Widely expressed including brain.

It is found in the membrane. It localises to the cytoplasm. The protein resides in the myofibril. The protein localises to the sarcomere. Its subcellular location is the z line. It carries out the reaction K(+)(in) = K(+)(out). With respect to regulation, inhibited by bee venom neurotoxin apamin. Inhibited by d-tubocurarine and tetraethylammonium (TEA). In terms of biological role, small conductance calcium-activated potassium channel that mediates the voltage-independent transmembrane transfer of potassium across the cell membrane through a constitutive interaction with calmodulin which binds the intracellular calcium allowing its opening. The current is characterized by a voltage-independent activation, an intracellular calcium concentration increase-dependent activation and a single-channel conductance of about 3 picosiemens. Also presents an inwardly rectifying current, thus reducing its already small outward conductance of potassium ions, which is particularly the case when the membrane potential displays positive values, above + 20 mV. Activation is followed by membrane hyperpolarization. Thought to regulate neuronal excitability by contributing to the slow component of synaptic afterhyperpolarization. The chain is Small conductance calcium-activated potassium channel protein 1 from Rattus norvegicus (Rat).